The primary structure comprises 613 residues: Forkhead box protein O (613 aa).

Disordered stretches follow at residues 39–90 (RARS…KNSS), 182–205 (KSVRRRAASMETSRYEKRRGRAKK), 217–269 (GLND…RLSP), and 317–360 (QGFS…PASG). At Thr44 the chain carries Phosphothreonine; by PKB/AKT1. Positions 63 to 80 (TKASNQQLAPGDSQQAIQ) are enriched in polar residues. Ser75 is modified (phosphoserine). Low complexity predominate over residues 81 to 90 (NANAAKKNSS). The fork-head DNA-binding region spans 95–201 (WGNLSYADLI…ETSRYEKRRG (107 aa)). Residue Ser190 is modified to Phosphoserine; by PKB/AKT1. Polar residues-rich tracts occupy residues 221–230 (ATPSPSSSVS) and 256–265 (RASSNASSCG). A Phosphoserine; by PKB/AKT1 modification is found at Ser259. Residues Ser262, Ser263, and Ser268 each carry the phosphoserine modification. A compositionally biased stretch (pro residues) spans 327–336 (SQPPPPPYQP). Residues 337-353 (PQHQQAQQQQQQQSPYA) are compositionally biased toward low complexity.

In terms of assembly, interacts with melt.

The protein localises to the cytoplasm. It is found in the nucleus. Functionally, transcription factor involved in the regulation of the insulin signaling pathway. Consistently activates both the downstream target Thor\d4EBP and the feedback control target InR. Involved in negative regulation of the cell cycle, modulating cell growth and proliferation. In response to cellular stresses, such as nutrient deprivation or increased levels of reactive oxygen species, foxo is activated and inhibits growth through the action of target genes such as Thor. Foxo activated in the adult fat body can regulate lifespan in adults; an insulin peptide itself may function as one secondary messenger of insulin-regulated aging. Also regulates Lip4, homolog of human acid lipases, thereby acting as a key modulator of lipid metabolism by insulin signaling and integrates insulin responses to glucose and lipid homeostasis. The polypeptide is Forkhead box protein O (Drosophila melanogaster (Fruit fly)).